We begin with the raw amino-acid sequence, 382 residues long: Chaperone protein DnaJ (382 aa).

Residues 4–69 (DYYEVLGVSR…DKRRRYDQFG (66 aa)) form the J domain. A CR-type zinc finger spans residues 138–219 (GVEKTIKIKK…CYGEGIKQGE (82 aa)). Zn(2+) is bound by residues C151, C154, C167, C170, C193, C196, C207, and C210. CXXCXGXG motif repeat units follow at residues 151–158 (CKECNGSG), 167–174 (CPTCHGAG), 193–200 (CPTCGGEG), and 207–214 (CPSCYGEG).

This sequence belongs to the DnaJ family. Homodimer. It depends on Zn(2+) as a cofactor.

The protein localises to the cytoplasm. Functionally, participates actively in the response to hyperosmotic and heat shock by preventing the aggregation of stress-denatured proteins and by disaggregating proteins, also in an autonomous, DnaK-independent fashion. Unfolded proteins bind initially to DnaJ; upon interaction with the DnaJ-bound protein, DnaK hydrolyzes its bound ATP, resulting in the formation of a stable complex. GrpE releases ADP from DnaK; ATP binding to DnaK triggers the release of the substrate protein, thus completing the reaction cycle. Several rounds of ATP-dependent interactions between DnaJ, DnaK and GrpE are required for fully efficient folding. Also involved, together with DnaK and GrpE, in the DNA replication of plasmids through activation of initiation proteins. This Chlorobium luteolum (strain DSM 273 / BCRC 81028 / 2530) (Pelodictyon luteolum) protein is Chaperone protein DnaJ.